Here is a 113-residue protein sequence, read N- to C-terminus: LSM complex subunit lsm7 (113 aa).

The span at 1-17 (MSSLQKRPGPGNSSQPT) shows a compositional bias: polar residues. Residues 1–23 (MSSLQKRPGPGNSSQPTERPRKE) are disordered. The region spanning 23–102 (ESILDLSRYQ…LVLIAPMDGS (80 aa)) is the Sm domain.

This sequence belongs to the snRNP Sm proteins family. Component of the heptameric LSM1-LSM7 complex that forms a seven-membered ring structure with a donut shape. The LSm subunits are arranged in the order lsm1, lsm2, lsm3, lsm6, lsm5, lsm7 and lsm4. Component of the heptameric LSM2-LSM8 complex that forms a seven-membered ring structure with a donut shape. The LSm subunits are arranged in the order lsm8, lsm2, lsm3, lsm6, lsm5, lsm7 and lsm4.

The protein localises to the cytoplasm. It is found in the nucleus. Component of LSm protein complexes, which are involved in RNA processing and may function in a chaperone-like manner. Component of the cytoplasmic LSM1-LSM7 complex which is involved in mRNA degradation by activating the decapping step. The LSM1-LSM7 complex loads onto the 3'-end of single stranded RNA. Component of the nuclear LSM2-LSM8 complex, which is involved in spliceosome assembly. The LSM2-LSM8 complex plays a role in the biogenesis of the spliceosomal U4/U6-U5 tri-snRNP complex by accelerating prp24-mediated annealing of U4/U6 di-snRNA. The LSM2-LSM8 complex binds U6 snRNA terminating with a cyclic 2',3' phosphate group; RNA with an unmodified 3' hydroxyl or non-cyclic 3' phosphate is bound less tightly. The polypeptide is LSM complex subunit lsm7 (lsm7) (Schizosaccharomyces pombe (strain 972 / ATCC 24843) (Fission yeast)).